A 336-amino-acid chain; its full sequence is uncharacterized protein (336 aa).

Basic and acidic residues predominate over residues 297 to 316; sequence KKDLQKSEEEEHPNDDHVYM. The disordered stretch occupies residues 297-336; it reads KKDLQKSEEEEHPNDDHVYMTEEDDMEKIERGIESLGNGH.

This is an uncharacterized protein from Invertebrate iridescent virus 6 (IIV-6).